The following is a 350-amino-acid chain: CMP-N-acetylneuraminate-beta-galactosamide-alpha-2,3-sialyltransferase 2 (350 aa).

The Cytoplasmic segment spans residues 1 to 6; the sequence is MKCSLR. The chain crosses the membrane as a helical; Signal-anchor for type II membrane protein span at residues 7 to 27; the sequence is VWFLSMAFLLVFIMSLLFTYS. The Lumenal portion of the chain corresponds to 28-350; it reads HHSMATLPYL…ASKIEVYRGN (323 aa). Cystine bridges form between Cys-70–Cys-75, Cys-72–Cys-149, and Cys-152–Cys-291. Substrate is bound by residues Gln-116, Asn-157, and Asn-180. Asn-211 carries an N-linked (GlcNAc...) asparagine glycan. The substrate site is built by Tyr-240, Tyr-276, Gly-280, Gly-300, His-309, and His-326.

It belongs to the glycosyltransferase 29 family. As to quaternary structure, homodimer; disulfide-linked. Homodimer formation occurs in the endoplasmic reticulum. The soluble form derives from the membrane form by proteolytic processing. Post-translationally, N-glycosylated; necessary for proper exit from endoplasmic reticulum and trafficking to the Golgi apparatus. In terms of tissue distribution, strongly expressed in brain and liver and to a lesser extent in heart and kidney. Scarcely detectable in lung, pancreas, spleen and submaxillary gland. Expressed in L5 dorsal root ganglion (DRG) neurons (at protein level).

Its subcellular location is the golgi apparatus. It is found in the golgi stack membrane. It localises to the secreted. The catalysed reaction is a beta-D-galactosyl-(1-&gt;3)-N-acetyl-alpha-D-galactosaminyl derivative + CMP-N-acetyl-beta-neuraminate = an N-acetyl-alpha-neuraminyl-(2-&gt;3)-beta-D-galactosyl-(1-&gt;3)-N-acetyl-alpha-D-galactosaminyl derivative + CMP + H(+). It carries out the reaction a ganglioside GM1 (d18:1(4E)) + CMP-N-acetyl-beta-neuraminate = a ganglioside GD1a (d18:1(4E)) + CMP + H(+). The enzyme catalyses ganglioside GM1 (d18:1(4E)/18:0) + CMP-N-acetyl-beta-neuraminate = ganglioside GD1a (18:1(4E)/18:0) + CMP + H(+). It catalyses the reaction a ganglioside GA1 + CMP-N-acetyl-beta-neuraminate = a ganglioside GM1b + CMP + H(+). The catalysed reaction is a ganglioside GA1 (d18:1(4E)) + CMP-N-acetyl-beta-neuraminate = a ganglioside GM1b (d18:1(4E)) + CMP + H(+). It carries out the reaction a ganglioside GD1b + CMP-N-acetyl-beta-neuraminate = a ganglioside GT1b + CMP + H(+). The enzyme catalyses a ganglioside GD1b (d18:1(4E)) + CMP-N-acetyl-beta-neuraminate = a ganglioside GT1b (d18:1(4E)) + CMP + H(+). It catalyses the reaction a globoside GalGb4Cer + CMP-N-acetyl-beta-neuraminate = a globoside MSGG + CMP + H(+). The protein operates within protein modification; protein glycosylation. It participates in glycolipid biosynthesis. In terms of biological role, a beta-galactoside alpha2-3 sialyltransferase primarily involved in terminal sialylation of ganglio and globo series glycolipids. Catalyzes the transfer of sialic acid (N-acetyl-neuraminic acid; Neu5Ac) from the nucleotide sugar donor CMP-Neu5Ac onto acceptor Galbeta-(1-&gt;3)-GalNAc-terminated glycoconjugates through an alpha2-3 linkage. Sialylates GM1/GM1a, GA1/asialo-GM1 and GD1b gangliosides to form GD1a, GM1b and GT1b, respectively. Together with ST3GAL3, primarily responsible for biosynthesis of brain GD1a and GT1b that function as ligands for myelin-associated glycoprotein MAG on axons, regulating MAG expression and axonal myelin stability and regeneration. Via GT1b regulates TLR2 signaling in spinal cord microglia in response to nerve injury. Responsible for the sialylation of the pluripotent stem cell- and cancer stem cell-associated antigen SSEA3, forming SSEA4. Sialylates with low efficiency asialofetuin, presumably onto O-glycosidically linked Galbeta-(1-&gt;3)-GalNAc-O-Ser. The sequence is that of CMP-N-acetylneuraminate-beta-galactosamide-alpha-2,3-sialyltransferase 2 from Mus musculus (Mouse).